A 617-amino-acid polypeptide reads, in one-letter code: Bifunctional TH2 protein, mitochondrial (617 aa).

Residues 1-28 constitute a mitochondrion transit peptide; it reads MRFLFPTRLINNSSLGLLRSPHTTAPIR. Asp107 contacts substrate. Residue Cys213 is the Nucleophile of the active site. Substrate-binding residues include Tyr217 and Tyr244. Residue Glu286 is the Proton donor of the active site.

In the N-terminal section; belongs to the TenA family. The protein in the C-terminal section; belongs to the HAD-like hydrolase superfamily.

The protein resides in the mitochondrion. The protein localises to the cytoplasm. The catalysed reaction is thiamine phosphate + H2O = thiamine + phosphate. It catalyses the reaction 4-amino-5-aminomethyl-2-methylpyrimidine + H2O = 4-amino-5-hydroxymethyl-2-methylpyrimidine + NH4(+). May be involved in the salvage of thiamine breakdown products. This protein has a haloacid dehalogenase family domain fused to its TenA domain. Phosphatase with the highest activity against thiamine monophosphate (ThMP) and, with a lower activity, against thiamine diphosphate (ThDP), flavin mononucleotide, inorganic pyrophosphate, CTP and dATP. Has a thiamine salvage hydrolase activity, but only against 4-amino-5-aminomethyl-2-methylpyrimidine (amino-HMP) and not against N-formylamino-HMP, desthiothiamine, thiamine, ThMP, and ThDP. In Arabidopsis thaliana (Mouse-ear cress), this protein is Bifunctional TH2 protein, mitochondrial.